The primary structure comprises 41 residues: Hadrurin (41 aa).

It belongs to the non-disulfide-bridged peptide (NDBP) superfamily. Long chain multifunctional peptide (group 2) family. Expressed by the venom gland.

It is found in the secreted. Antimicrobial activity against S.typhimurium, K.pneumoniae, E.cloacae, P.aeruginosa, E.coli and S.marcescens. Also shows hemolytic activity when tested in human erythrocytes. This Hoffmannihadrurus aztecus (Mexican scorpion) protein is Hadrurin.